The primary structure comprises 729 residues: 1,4-alpha-glucan branching enzyme GlgB (729 aa).

Aspartate 407 serves as the catalytic Nucleophile. Glutamate 460 serves as the catalytic Proton donor.

The protein belongs to the glycosyl hydrolase 13 family. GlgB subfamily. In terms of assembly, monomer.

The enzyme catalyses Transfers a segment of a (1-&gt;4)-alpha-D-glucan chain to a primary hydroxy group in a similar glucan chain.. Its pathway is glycan biosynthesis; glycogen biosynthesis. Functionally, catalyzes the formation of the alpha-1,6-glucosidic linkages in glycogen by scission of a 1,4-alpha-linked oligosaccharide from growing alpha-1,4-glucan chains and the subsequent attachment of the oligosaccharide to the alpha-1,6 position. The polypeptide is 1,4-alpha-glucan branching enzyme GlgB (Pseudoalteromonas atlantica (strain T6c / ATCC BAA-1087)).